The chain runs to 195 residues: Interferon tau-2 (195 aa).

The signal sequence occupies residues 1 to 23 (MAFVLSLLMALVLVSYGPGGSLG). 2 disulfide bridges follow: C24–C122 and C52–C162.

The protein belongs to the alpha/beta interferon family. IFN-alphaII subfamily. In terms of tissue distribution, constitutively and exclusively expressed in the mononuclear cells of the extraembryonic trophectoderm.

It is found in the secreted. In terms of biological role, paracrine hormone primarily responsible for maternal recognition of pregnancy. Interacts with endometrial receptors, probably type I interferon receptors, and blocks estrogen receptor expression, preventing the estrogen-induced increase in oxytocin receptor expression in the endometrium. This results in the suppression of the pulsatile endometrial release of the luteolytic hormone prostaglandin F2-alpha, hindering the regression of the corpus luteum (luteolysis) and therefore a return to ovarian cyclicity. This, and a possible direct effect of IFN-tau on prostaglandin synthesis, leads in turn to continued ovarian progesterone secretion, which stimulates the secretion by the endometrium of the nutrients required for the growth of the conceptus. In summary, displays particularly high antiviral and antiproliferative potency concurrently with particular weak cytotoxicity, high antiluteolytic activity and immunomodulatory properties. In contrast with other IFNs, IFN-tau is not virally inducible. The polypeptide is Interferon tau-2 (IFNT2) (Ovis aries (Sheep)).